Reading from the N-terminus, the 821-residue chain is Fibroblast growth factor receptor 2 (821 aa).

The signal sequence occupies residues 1–21 (MVSWGRFICLVVVTMATLSLA). Topologically, residues 22-377 (RPSFSLVEDT…EITASPDYLE (356 aa)) are extracellular. In terms of domain architecture, Ig-like C2-type 1 spans 25 to 125 (FSLVEDTTLE…ETWYFMVNVT (101 aa)). C62 and C107 are oxidised to a cystine. Residues N83 and N123 are each glycosylated (N-linked (GlcNAc...) asparagine). Residues 131 to 144 (GDDEDDTDGAEDFV) show a composition bias toward acidic residues. The interval 131 to 151 (GDDEDDTDGAEDFVSENSNNK) is disordered. 2 Ig-like C2-type domains span residues 154 to 247 (PYWT…YHLD) and 256 to 358 (PILQ…AWLT). Residues 161-178 (KMEKRLHAVPAANTVKFR) form a heparin-binding region. An intrachain disulfide couples C179 to C231. 6 N-linked (GlcNAc...) asparagine glycosylation sites follow: N228, N241, N265, N297, N318, and N331. An intrachain disulfide couples C278 to C342. A helical membrane pass occupies residues 378 to 398 (IAIYCIGVFLIACMVVTVILC). Topologically, residues 399–821 (RMKNTTKKPD…YPHINGSVKT (423 aa)) are cytoplasmic. The residue at position 466 (Y466) is a Phosphotyrosine; by autocatalysis. Positions 481-770 (LTLGKPLGEG…LTLTTNEEYL (290 aa)) constitute a Protein kinase domain. ATP contacts are provided by residues 487-495 (LGEGCFGQV), K517, 565-567 (EYA), and N571. A phosphotyrosine; by autocatalysis mark is found at Y586 and Y588. The Proton acceptor role is filled by D626. Residues Y656, Y657, and Y769 each carry the phosphotyrosine; by autocatalysis modification. S780 carries the post-translational modification Phosphoserine.

The protein belongs to the protein kinase superfamily. Tyr protein kinase family. Fibroblast growth factor receptor subfamily. As to quaternary structure, monomer. Homodimer after ligand binding. Interacts predominantly with FGF1 and FGF2, but can also interact with FGF3, FGF4, FGF6, FGF7, FGF8, FGF9, FGF10, FGF17, FGF18 and FGF22 (in vitro). Ligand specificity is determined by tissue-specific expression of isoforms, and differences in the third Ig-like domain are crucial for ligand specificity. Isoform 1 has high affinity for FGF1 and FGF2, but low affinity for FGF7. Isoform 3 has high affinity for FGF1 and FGF7, and has much higher affinity for FGF7 than isoform 1 (in vitro). Affinity for fibroblast growth factors (FGFs) is increased by heparan sulfate glycosaminoglycans that function as coreceptors. Likewise, KLB increases the affinity for FGF19 and FGF21. Interacts with PLCG1, GRB2 and PAK4. Interacts with FLRT2. Autophosphorylated. Binding of FGF family members together with heparan sulfate proteoglycan or heparin promotes receptor dimerization and autophosphorylation on several tyrosine residues. Autophosphorylation occurs in trans between the two FGFR molecules present in the dimer. Phosphorylation at Tyr-769 is essential for interaction with PLCG1. In terms of processing, N-glycosylated in the endoplasmic reticulum. The N-glycan chains undergo further maturation to an Endo H-resistant form in the Golgi apparatus. Post-translationally, ubiquitinated. FGFR2 is rapidly ubiquitinated after autophosphorylation, leading to internalization and degradation. Subject to degradation both in lysosomes and by the proteasome.

It localises to the cell membrane. Its subcellular location is the golgi apparatus. It is found in the cytoplasmic vesicle. The protein resides in the secreted. The catalysed reaction is L-tyrosyl-[protein] + ATP = O-phospho-L-tyrosyl-[protein] + ADP + H(+). Present in an inactive conformation in the absence of bound ligand. Ligand binding leads to dimerization and activation by autophosphorylation on tyrosine residues. Inhibited by ARQ 523 and ARQ 069; these compounds maintain the kinase in an inactive conformation and inhibit autophosphorylation. Tyrosine-protein kinase that acts as a cell-surface receptor for fibroblast growth factors and plays an essential role in the regulation of cell proliferation, differentiation, migration and apoptosis, and in the regulation of embryonic development. Required for normal embryonic patterning, trophoblast function, limb bud development, lung morphogenesis, osteogenesis and skin development. Plays an essential role in the regulation of osteoblast differentiation, proliferation and apoptosis, and is required for normal skeleton development. Promotes cell proliferation in keratinocytes and immature osteoblasts, but promotes apoptosis in differentiated osteoblasts. Phosphorylates PLCG1, FRS2 and PAK4. Ligand binding leads to the activation of several signaling cascades. Activation of PLCG1 leads to the production of the cellular signaling molecules diacylglycerol and inositol 1,4,5-trisphosphate. Phosphorylation of FRS2 triggers recruitment of GRB2, GAB1, PIK3R1 and SOS1, and mediates activation of RAS, MAPK1/ERK2, MAPK3/ERK1 and the MAP kinase signaling pathway, as well as of the AKT1 signaling pathway. FGFR2 signaling is down-regulated by ubiquitination, internalization and degradation. Mutations that lead to constitutive kinase activation or impair normal FGFR2 maturation, internalization and degradation lead to aberrant signaling. Over-expressed FGFR2 promotes activation of STAT1. This is Fibroblast growth factor receptor 2 (FGFR2) from Homo sapiens (Human).